Consider the following 685-residue polypeptide: MESTTAFSAVTSALGIQDVHIMAPYLWMLVLGFVIAFVLAFSVGANDVANSFGTAVGSGVVTLRQACILASIFETVGSVLLGAKVSETIRKGLIDVTMYNSTQELLMAGSISAMFGSAVWQLAASFLKLPISGTHCIVGATIGFSLVAKGQQGVKWIELLRIVLSWFISPLLSGIMSALLFFFVKKFILCKADPVPNGLRALPVFYACTIGINLFSIMYTGAPLLGFDKVPLWGIILISVGCAVFCALFVWFFVCPRMKRKIECEFKSSPSESPLMNKKNRELHCPILKPDPDNIKLPVDGGIVAEVKVPILDMVTVSRTEERTVTFNMGDCDDPIEKEKLNSMETNIDQPMNGSVQLANGNHVQFSQTVSNEMNSSGQYQYHTVHKDSGLYKDLLHKLHLAKVGDCMGDSGDKPLRRNNSYTSYTMAICGMPLDSFRNWDAEARPDEAEKLTVHGADGKKRIRMDSYTSYCNAVADAHMDVEAEEQEEGCIEDVVTDRKSSSSSLEERHDQDKPEVSLLFQFLQILTACFGSFAHGGNDVSNAIGPLVALYLVYESGDVATKAATPIWLLLYGGIGICIGLWVWGRRVIQTMGKDLTPITPSSGFSIELASALTVVIASNVGLPISTTHCKVGSVVSVGWLRSKKAVDWRLFRNIFLAWFVTVPISGLISAGIMALFKYAILKV.

A run of 6 helical transmembrane segments spans residues 21–41 (IMAP…VLAF), 66–86 (ACIL…AKVS), 106–126 (LMAG…AASF), 162–182 (IVLS…LLFF), 207–227 (ACTI…LLGF), and 234–254 (GIIL…WFFV). Residues 489-511 (EGCIEDVVTDRKSSSSSLEERHD) are disordered. Residues 496–511 (VTDRKSSSSSLEERHD) show a composition bias toward basic and acidic residues. The next 4 helical transmembrane spans lie at 517–537 (VSLL…FAHG), 565–585 (ATPI…LWVW), 606–626 (FSIE…GLPI), and 656–676 (IFLA…GIMA).

The protein belongs to the inorganic phosphate transporter (PiT) (TC 2.A.20) family.

The protein localises to the membrane. Functionally, sodium-phosphate symporter which plays a fundamental housekeeping role in phosphate transport. This is Sodium-dependent phosphate transporter 1-B (slc20a1-b) from Xenopus laevis (African clawed frog).